The following is a 486-amino-acid chain: Transcription factor aptf-4 (486 aa).

Disordered regions lie at residues 25–49 (CEPS…SAKM) and 150–173 (LSTT…NQEK). Polar residues predominate over residues 150 to 169 (LSTTSANFTPDWNTTTNGPC). The H-S-H (helix-span-helix), dimerization stretch occupies residues 301-430 (QRQRKVTCFS…IVEQAALYCE (130 aa)).

The protein belongs to the AP-2 family. As to quaternary structure, binds DNA as a dimer.

The protein resides in the nucleus. Sequence-specific DNA-binding protein that interacts with enhancer elements to regulate transcription of selected genes. Required for neuroblast and epidermal morphogenesis, perhaps acting in cooperation with transcription factor aptf-2. In Caenorhabditis elegans, this protein is Transcription factor aptf-4.